Consider the following 126-residue polypeptide: C-type natriuretic peptide (126 aa).

The first 23 residues, 1–23, serve as a signal peptide directing secretion; it reads MHLSQLIACALLLALLSLRPSEA. A disordered region spans residues 20-73; sequence PSEAKPGTPPKVPRTPPGEELADSQAAGGNQKKGDKTPGSGGANLKGDRSRLLR. Residues 24 to 73 constitute a propeptide that is removed on maturation; sequence KPGTPPKVPRTPPGEELADSQAAGGNQKKGDKTPGSGGANLKGDRSRLLR. Positions 26-35 are enriched in pro residues; that stretch reads GTPPKVPRTP. A disulfide bridge connects residues Cys-110 and Cys-126.

This sequence belongs to the natriuretic peptide family. In terms of processing, degraded by IDE (in vitro).

The protein localises to the secreted. Its function is as follows. Hormone which plays a role in endochondral ossification through regulation of cartilaginous growth plate chondrocytes proliferation and differentiation. May also be vasoactive and natriuretic. Acts by specifically binding and stimulating NPR2 to produce cGMP. Binds the clearance receptor NPR3. This chain is C-type natriuretic peptide (Nppc), found in Mus musculus (Mouse).